We begin with the raw amino-acid sequence, 195 residues long: U8 snoRNA-decapping enzyme (195 aa).

The Nudix hydrolase domain maps to Gly18 to Arg168. 3 residues coordinate substrate: His24, Arg50, and Phe57. 4 residues coordinate Mn(2+): Gly59, Glu76, Glu80, and His99. The short motif at Phe61–Gly82 is the Nudix box element. Residues Asn166 and Gln170 each coordinate substrate. Glu173 is a binding site for Mn(2+).

The protein belongs to the Nudix hydrolase family. NUDT16 subfamily. Homodimer. The cofactor is Mg(2+). It depends on Mn(2+) as a cofactor. Co(2+) is required as a cofactor.

The protein resides in the nucleus. It is found in the nucleolus. Its subcellular location is the nucleoplasm. It localises to the cytoplasm. The enzyme catalyses a 5'-end (N(7)-methyl 5'-triphosphoguanosine)-ribonucleoside in mRNA + H2O = N(7)-methyl-GDP + a 5'-end phospho-ribonucleoside in mRNA + 2 H(+). It carries out the reaction IDP + H2O = IMP + phosphate + H(+). The catalysed reaction is dIDP + H2O = dIMP + phosphate + H(+). It catalyses the reaction a 5'-end NAD(+)-phospho-ribonucleoside in mRNA + H2O = a 5'-end phospho-ribonucleoside in mRNA + NAD(+) + H(+). The enzyme catalyses a 5'-end FAD-phospho-ribonucleoside in mRNA + H2O = a 5'-end phospho-adenosine-phospho-ribonucleoside in mRNA + FMN + 2 H(+). It carries out the reaction a 5'-end CoA-ribonucleoside in mRNA + H2O = a 5'-end phospho-adenosine-phospho-ribonucleoside in mRNA + (R)-4'-phosphopantetheine + 2 H(+). Functionally, RNA-binding and decapping enzyme that catalyzes the cleavage of the cap structure of snoRNAs and mRNAs in a metal-dependent manner. Part of the U8 snoRNP complex that is required for the accumulation of mature 5.8S and 28S rRNA. Has diphosphatase activity and removes m7G and/or m227G caps from U8 snoRNA and leaves a 5'monophosphate on the RNA. Also catalyzes the cleavage of the cap structure on mRNAs. Does not hydrolyze cap analog structures like 7-methylguanosine nucleoside triphosphate (m7GpppG). Also hydrolysis m7G- and m227G U3-capped RNAs but with less efficiencies. Has broad substrate specificity with manganese or cobalt as cofactor and can act on various RNA species. Binds to the U8 snoRNA; metal is not required for RNA-binding. May play a role in the regulation of snoRNAs and mRNAs degradation. Also acts as a phosphatase; hydrolyzes the non-canonical purine nucleotides inosine diphosphate (IDP) and deoxyinosine diphosphate (dITP) as well as guanosine diphosphate (GDP), deoxyguanosine diphosphate (dGDP), xanthine diphosphate (XDP), inosine triphosphate (ITP) and deoxyinosine triphosphate (ITP) to their respective monophosphate derivatives and does not distinguish between the deoxy- and ribose forms. The order of activity with different substrates is IDP &gt; dIDP &gt;&gt; GDP = dGDP &gt; XDP = ITP = dITP. Binds strongly to GTP, ITP and XTP. Participates in the hydrolysis of dIDP/IDP and probably excludes non-canonical purines from RNA and DNA precursor pools, thus preventing their incorporation into RNA and DNA and avoiding chromosomal lesions. Exhibits decapping activity towards NAD-capped RNAs and FAD-capped RNAs. Exhibits decapping activity towards dpCoA-capped RNAs in vitro. The polypeptide is U8 snoRNA-decapping enzyme (NUDT16) (Ovis aries (Sheep)).